The sequence spans 298 residues: 33 kDa chaperonin (298 aa).

2 disulfide bridges follow: cysteine 237–cysteine 239 and cysteine 270–cysteine 273.

The protein belongs to the HSP33 family. Under oxidizing conditions two disulfide bonds are formed involving the reactive cysteines. Under reducing conditions zinc is bound to the reactive cysteines and the protein is inactive.

Its subcellular location is the cytoplasm. Functionally, redox regulated molecular chaperone. Protects both thermally unfolding and oxidatively damaged proteins from irreversible aggregation. Plays an important role in the bacterial defense system toward oxidative stress. The sequence is that of 33 kDa chaperonin from Enterococcus faecalis (strain ATCC 700802 / V583).